The primary structure comprises 194 residues: MTIKLIVGLANPGAEYAATRHNAGAWFVDLLAERLRAPLREEAKFFGYTSRVTLGGEDVRLLVPTTFMNLSGKAVAAMASFFRINPDEILVAHDELDLPPGVAKLKLGGGHGGHNGLKDIISKLGNNPNFHRLRIGIGHPGDKNKVVGFVLGKPPVSEQKLIDEAIDEAARCTEMWFTDGLTKATNRLHAFKAQ.

Tyrosine 16 contacts tRNA. Histidine 21 (proton acceptor) is an active-site residue. The tRNA site is built by phenylalanine 67, asparagine 69, and asparagine 115.

Belongs to the PTH family. As to quaternary structure, monomer.

It is found in the cytoplasm. The catalysed reaction is an N-acyl-L-alpha-aminoacyl-tRNA + H2O = an N-acyl-L-amino acid + a tRNA + H(+). Functionally, hydrolyzes ribosome-free peptidyl-tRNAs (with 1 or more amino acids incorporated), which drop off the ribosome during protein synthesis, or as a result of ribosome stalling. Catalyzes the release of premature peptidyl moieties from peptidyl-tRNA molecules trapped in stalled 50S ribosomal subunits, and thus maintains levels of free tRNAs and 50S ribosomes. This Shigella boydii serotype 18 (strain CDC 3083-94 / BS512) protein is Peptidyl-tRNA hydrolase.